The primary structure comprises 259 residues: Undecaprenyl-diphosphatase 3 (259 aa).

8 helical membrane-spanning segments follow: residues 1 to 21 (MNWL…FLPI), 39 to 59 (AGLF…FIYY), 71 to 91 (FSKL…IGLL), 99 to 119 (ISKT…FLYM), 133 to 153 (ITYK…FPAI), 174 to 194 (AYFS…LQFV), 208 to 228 (SLIV…SWMI), and 239 to 259 (FAYY…TDVF).

It belongs to the UppP family.

The protein resides in the cell membrane. It catalyses the reaction di-trans,octa-cis-undecaprenyl diphosphate + H2O = di-trans,octa-cis-undecaprenyl phosphate + phosphate + H(+). In terms of biological role, catalyzes the dephosphorylation of undecaprenyl diphosphate (UPP). Confers resistance to bacitracin. The protein is Undecaprenyl-diphosphatase 3 of Bacillus cereus (strain ATCC 14579 / DSM 31 / CCUG 7414 / JCM 2152 / NBRC 15305 / NCIMB 9373 / NCTC 2599 / NRRL B-3711).